Reading from the N-terminus, the 391-residue chain is Trehalose-phosphate phosphatase (391 aa).

Catalysis depends on D147, which acts as the Nucleophile. Residues D147, D149, and D330 each coordinate Mg(2+). 147–149 (DFD) provides a ligand contact to substrate.

Belongs to the trehalose phosphatase family. Mg(2+) is required as a cofactor.

The catalysed reaction is alpha,alpha-trehalose 6-phosphate + H2O = alpha,alpha-trehalose + phosphate. The protein operates within glycan biosynthesis; trehalose biosynthesis. Removes the phosphate from trehalose 6-phosphate to produce free trehalose. This Mycobacterium avium (strain 104) protein is Trehalose-phosphate phosphatase (otsB).